The following is a 186-amino-acid chain: ATP synthase subunit delta (186 aa).

It belongs to the ATPase delta chain family. In terms of assembly, F-type ATPases have 2 components, F(1) - the catalytic core - and F(0) - the membrane proton channel. F(1) has five subunits: alpha(3), beta(3), gamma(1), delta(1), epsilon(1). F(0) has three main subunits: a(1), b(2) and c(10-14). The alpha and beta chains form an alternating ring which encloses part of the gamma chain. F(1) is attached to F(0) by a central stalk formed by the gamma and epsilon chains, while a peripheral stalk is formed by the delta and b chains.

The protein localises to the cell inner membrane. Functionally, f(1)F(0) ATP synthase produces ATP from ADP in the presence of a proton or sodium gradient. F-type ATPases consist of two structural domains, F(1) containing the extramembraneous catalytic core and F(0) containing the membrane proton channel, linked together by a central stalk and a peripheral stalk. During catalysis, ATP synthesis in the catalytic domain of F(1) is coupled via a rotary mechanism of the central stalk subunits to proton translocation. In terms of biological role, this protein is part of the stalk that links CF(0) to CF(1). It either transmits conformational changes from CF(0) to CF(1) or is implicated in proton conduction. This is ATP synthase subunit delta from Bacteroides thetaiotaomicron (strain ATCC 29148 / DSM 2079 / JCM 5827 / CCUG 10774 / NCTC 10582 / VPI-5482 / E50).